Here is a 285-residue protein sequence, read N- to C-terminus: Nucleotide-binding protein PFL_0912 (285 aa).

An ATP-binding site is contributed by 8-15 (GRSGSGKS). 60–63 (DARN) is a binding site for GTP.

This sequence belongs to the RapZ-like family.

Functionally, displays ATPase and GTPase activities. This Pseudomonas fluorescens (strain ATCC BAA-477 / NRRL B-23932 / Pf-5) protein is Nucleotide-binding protein PFL_0912.